A 226-amino-acid chain; its full sequence is Cytidylate kinase (226 aa).

ATP is bound at residue 10–18 (GPASSGKST).

It belongs to the cytidylate kinase family. Type 1 subfamily.

Its subcellular location is the cytoplasm. The catalysed reaction is CMP + ATP = CDP + ADP. The enzyme catalyses dCMP + ATP = dCDP + ADP. The sequence is that of Cytidylate kinase from Streptococcus equi subsp. zooepidemicus (strain MGCS10565).